Reading from the N-terminus, the 543-residue chain is Probable bifunctional tRNA threonylcarbamoyladenosine biosynthesis protein (543 aa).

The kae1 stretch occupies residues 1 to 329 (MDISKDLICI…YRSDMVEVNW (329 aa)). Fe cation contacts are provided by His112, His116, and Tyr133. L-threonylcarbamoyladenylate is bound by residues 133–137 (YVSGG), Asp165, Gly178, Glu182, and Asn262. Asp290 serves as a coordination point for Fe cation. The region spanning 342 to 543 (IIPEHLIGKG…KEVEKRARYL (202 aa)) is the Protein kinase domain. Residues 348–356 (IGKGAEADI) and Lys369 each bind ATP. Asp461 serves as the catalytic Proton acceptor; for kinase activity.

The protein in the N-terminal section; belongs to the KAE1 / TsaD family. It in the C-terminal section; belongs to the protein kinase superfamily. Tyr protein kinase family. BUD32 subfamily. As to quaternary structure, component of the KEOPS complex that consists of Kae1, Bud32, Cgi121 and Pcc1; the whole complex dimerizes. Requires Fe(2+) as cofactor.

It is found in the cytoplasm. It carries out the reaction L-seryl-[protein] + ATP = O-phospho-L-seryl-[protein] + ADP + H(+). The enzyme catalyses L-threonyl-[protein] + ATP = O-phospho-L-threonyl-[protein] + ADP + H(+). It catalyses the reaction L-threonylcarbamoyladenylate + adenosine(37) in tRNA = N(6)-L-threonylcarbamoyladenosine(37) in tRNA + AMP + H(+). Required for the formation of a threonylcarbamoyl group on adenosine at position 37 (t(6)A37) in tRNAs that read codons beginning with adenine. Is a component of the KEOPS complex that is probably involved in the transfer of the threonylcarbamoyl moiety of threonylcarbamoyl-AMP (TC-AMP) to the N6 group of A37. The Kae1 domain likely plays a direct catalytic role in this reaction. The Bud32 domain probably displays kinase activity that regulates Kae1 function. This is Probable bifunctional tRNA threonylcarbamoyladenosine biosynthesis protein from Methanococcus maripaludis (strain C6 / ATCC BAA-1332).